A 215-amino-acid chain; its full sequence is MEKYQSDFIQLAIKHQALCFGEFVLKSGRTSPYFFNAGRFQTGSALAELGRHYAAAITAAGVDFDVVFGPAYKGIPLAAATAIALADEFGRDLPYCYNRKEAKDHGEGGTLVGAPLKGRILIVDDVITAGTAVREVMGIIQQAGAQPAAVLIGLNRQEKGRGELSAIQEVEQNFGVPVISIINLNHIIHYLEHQPGQAALVDRIKSYRATYGVEL.

Lys26 is a 5-phospho-alpha-D-ribose 1-diphosphate binding site. Residue 34–35 participates in orotate binding; it reads FF. 5-phospho-alpha-D-ribose 1-diphosphate contacts are provided by residues 72-73, Arg99, Lys100, Lys103, His105, and 124-132; these read YK and DDVITAGTA. Orotate-binding residues include Thr128 and Arg156.

Belongs to the purine/pyrimidine phosphoribosyltransferase family. PyrE subfamily. As to quaternary structure, homodimer. It depends on Mg(2+) as a cofactor.

It carries out the reaction orotidine 5'-phosphate + diphosphate = orotate + 5-phospho-alpha-D-ribose 1-diphosphate. The protein operates within pyrimidine metabolism; UMP biosynthesis via de novo pathway; UMP from orotate: step 1/2. In terms of biological role, catalyzes the transfer of a ribosyl phosphate group from 5-phosphoribose 1-diphosphate to orotate, leading to the formation of orotidine monophosphate (OMP). This Cellvibrio japonicus (strain Ueda107) (Pseudomonas fluorescens subsp. cellulosa) protein is Orotate phosphoribosyltransferase.